The primary structure comprises 346 residues: Protein RecA (346 aa).

Position 66 to 73 (66 to 73 (GPESSGKT)) interacts with ATP.

It belongs to the RecA family.

The protein resides in the cytoplasm. Functionally, can catalyze the hydrolysis of ATP in the presence of single-stranded DNA, the ATP-dependent uptake of single-stranded DNA by duplex DNA, and the ATP-dependent hybridization of homologous single-stranded DNAs. It interacts with LexA causing its activation and leading to its autocatalytic cleavage. The sequence is that of Protein RecA from Aromatoleum aromaticum (strain DSM 19018 / LMG 30748 / EbN1) (Azoarcus sp. (strain EbN1)).